The following is a 228-amino-acid chain: Sec-independent protein translocase protein TatB (228 aa).

Residues 1–21 (MFDFGLGELVFVGIIALIVLG) form a helical membrane-spanning segment. Disordered regions lie at residues 109 to 162 (DFGV…AETD) and 197 to 228 (PHTT…VRKS). The segment covering 206 to 228 (AISRKRDFRPKHRAKPKLRVRKS) has biased composition (basic residues).

This sequence belongs to the TatB family. The Tat system comprises two distinct complexes: a TatABC complex, containing multiple copies of TatA, TatB and TatC subunits, and a separate TatA complex, containing only TatA subunits. Substrates initially bind to the TatABC complex, which probably triggers association of the separate TatA complex to form the active translocon.

Its subcellular location is the cell inner membrane. Part of the twin-arginine translocation (Tat) system that transports large folded proteins containing a characteristic twin-arginine motif in their signal peptide across membranes. Together with TatC, TatB is part of a receptor directly interacting with Tat signal peptides. TatB may form an oligomeric binding site that transiently accommodates folded Tat precursor proteins before their translocation. The chain is Sec-independent protein translocase protein TatB from Neisseria meningitidis serogroup B (strain ATCC BAA-335 / MC58).